The sequence spans 393 residues: Dual specificity mitogen-activated protein kinase kinase 1 (393 aa).

Residues Met-1 to Glu-27 are disordered. Positions Phe-68–Ile-361 constitute a Protein kinase domain. ATP contacts are provided by residues Leu-74–Val-82 and Lys-97. The active-site Proton acceptor is Asp-190. Phosphoserine; by RAF occurs at positions 218 and 222. An RAF1-binding region spans residues Glu-270 to Pro-307. Thr-286 bears the Phosphothreonine mark. Thr-292 is subject to Phosphothreonine; by MAPK1. Ser-298 is subject to Phosphoserine; by PAK.

This sequence belongs to the protein kinase superfamily. STE Ser/Thr protein kinase family. MAP kinase kinase subfamily. As to quaternary structure, found in a complex with at least BRAF, HRAS, MAP2K1, MAPK3/ERK1 and RGS14. Forms a heterodimer with MAP2K2/MEK2. Forms heterodimers with KSR2 which further dimerize to form tetramers. Interacts with KSR1 or KSR2 and BRAF; the interaction with KSR1 or KSR2 mediates KSR1-BRAF or KSR2-BRAF dimerization. Interacts with ARBB2, LAMTOR3, MAPK1/ERK2 and RAF1. Interacts with MAPK1/ERK2. Interacts with MORG1. Interacts with PPARG. Interacts with SGK1. Interacts with BIRC6/bruce. Interacts with KAT7; the interaction promotes KAT7 phosphorylation. Interacts with RAF1 and NEK10; the interaction is required for ERK1/2-signaling pathway activation in response to UV irradiation. Interacts with TRAF3IP3. Interacts with MOS. Phosphorylation at Ser-218 and Ser-222 by MAP kinase kinase kinases (BRAF or MEKK1) positively regulates kinase activity. Also phosphorylated at Thr-292 by MAPK1/ERK2 and at Ser-298 by PAK. MAPK1/ERK2 phosphorylation of Thr-292 occurs in response to cellular adhesion and leads to inhibition of Ser-298 phosphorylation by PAK. Autophosphorylated at Ser-218 and Ser-222, autophosphosphorylation is promoted by NEK10 following UV irradiation.

Its subcellular location is the cytoplasm. The protein resides in the cytoskeleton. It is found in the microtubule organizing center. It localises to the centrosome. The protein localises to the spindle pole body. Its subcellular location is the nucleus. The protein resides in the membrane. The catalysed reaction is L-seryl-[protein] + ATP = O-phospho-L-seryl-[protein] + ADP + H(+). It catalyses the reaction L-threonyl-[protein] + ATP = O-phospho-L-threonyl-[protein] + ADP + H(+). It carries out the reaction L-tyrosyl-[protein] + ATP = O-phospho-L-tyrosyl-[protein] + ADP + H(+). With respect to regulation, ras proteins such as HRAS mediate the activation of RAF proteins such as RAF1 or BRAF which in turn activate extracellular signal-regulated kinases (ERK) through MAPK (mitogen-activated protein kinases) and ERK kinases MAP2K1/MEK1 and MAP2K2/MEK2. Activation occurs through phosphorylation of Ser-218 and Ser-222. MAP2K1/MEK1 binds KSR1 or KSR2 releasing the inhibitory intramolecular interaction between KSR1 or KSR2 protein kinase and N-terminal domains. This allows KSR1 or KSR2 dimerization with BRAF leading to BRAF activation and phosphorylation of MAP2K1. MAP2K1/MEK1 is also the target of negative feed-back regulation by its substrate kinases, such as MAPK1/ERK2. These phosphorylate MAP2K1/MEK1 on Thr-292, thereby facilitating dephosphorylation of the activating residues Ser-218 and Ser-222. Inhibited by serine/threonine phosphatase 2A. Functionally, dual specificity protein kinase which acts as an essential component of the MAP kinase signal transduction pathway. Binding of extracellular ligands such as growth factors, cytokines and hormones to their cell-surface receptors activates RAS and this initiates RAF1 activation. RAF1 then further activates the dual-specificity protein kinases MAP2K1/MEK1 and MAP2K2/MEK2. Both MAP2K1/MEK1 and MAP2K2/MEK2 function specifically in the MAPK/ERK cascade, and catalyze the concomitant phosphorylation of a threonine and a tyrosine residue in a Thr-Glu-Tyr sequence located in the extracellular signal-regulated kinases MAPK3/ERK1 and MAPK1/ERK2, leading to their activation and further transduction of the signal within the MAPK/ERK cascade. Activates BRAF in a KSR1 or KSR2-dependent manner; by binding to KSR1 or KSR2 releases the inhibitory intramolecular interaction between KSR1 or KSR2 protein kinase and N-terminal domains which promotes KSR1 or KSR2-BRAF dimerization and BRAF activation. Depending on the cellular context, this pathway mediates diverse biological functions such as cell growth, adhesion, survival and differentiation, predominantly through the regulation of transcription, metabolism and cytoskeletal rearrangements. One target of the MAPK/ERK cascade is peroxisome proliferator-activated receptor gamma (PPARG), a nuclear receptor that promotes differentiation and apoptosis. MAP2K1/MEK1 has been shown to export PPARG from the nucleus. The MAPK/ERK cascade is also involved in the regulation of endosomal dynamics, including lysosome processing and endosome cycling through the perinuclear recycling compartment (PNRC), as well as in the fragmentation of the Golgi apparatus during mitosis. This is Dual specificity mitogen-activated protein kinase kinase 1 (Map2k1) from Mus musculus (Mouse).